The chain runs to 320 residues: MALEAVVYPQDPFSYISCKDFPFYDLYFQEEEDQDPQDTKNNIKLGQGQGHGFASNNYNGRTGDYSDDYNYNEEDLQWPRDLPYGSAVDTESQPPPSDVAAGGGRRKRRRTRSSKNKEEIENQRMTHIAVERNRRKQMNEYLAVLRSLMPPYYAQRGDQASIVGGAINYLKELEHHLQSMEPPVKTATEDTGAGHDQTKTTSASSSGPFSDFFAFPQYSNRPTSAAAAEGMAEIEVTMVESHASLKILAKKRPRQLLKLVSSIQSLRLTLLHLNVTTRDDSVLYSISVKVEEGSQLNTVEDIAAAVNQILRRIEEESSFS.

A disordered region spans residues 30 to 121; sequence EEEDQDPQDT…RSSKNKEEIE (92 aa). Positions 65–76 are enriched in acidic residues; it reads YSDDYNYNEEDL. Positions 104 to 114 are enriched in basic residues; that stretch reads GRRKRRRTRSS. The bHLH domain occupies 122–173; that stretch reads NQRMTHIAVERNRRKQMNEYLAVLRSLMPPYYAQRGDQASIVGGAINYLKEL. Residues 184–206 are disordered; sequence VKTATEDTGAGHDQTKTTSASSS. Positions 244 to 320 constitute an ACT domain; it reads SLKILAKKRP…RRIEEESSFS (77 aa).

As to quaternary structure, homodimer. As to expression, expressed constitutively in roots, leaves, stems, and flowers.

It is found in the nucleus. This is Transcription factor bHLH96 (BHLH96) from Arabidopsis thaliana (Mouse-ear cress).